We begin with the raw amino-acid sequence, 373 residues long: MKAKNVNLLFAFVAVLLFGFSCFCISRMNQTNNQLINCRNHVLEFKEIMLRLKNKSENHHQDLMQVLYQMKRKAAHTTRSSGNFLEKKGSILSQHETLPNQFEVLKYFLPHLRTAGKLYPAIATSKGRAGVSFALGISTINRGNHTYLKQTLTSVLSRMTPEEEEDSVVIVSVADTDESYLKSVVRMVKTKFRKQVQSGVLEVISIPTLFYPQTLLDKKTKTDSESWQIKQVLDFCILMLYAQPKATYYLQLEDDIVAKKMYFTKMKDFVNSLTSKNWFFIEFSVLGFIGKLFRSKDLTDFVHFFLMFYETKPIDILLDDIFLIRVCISGEPVRSCLQRKKGFRIQYRPSLFQHVGTQSSFPGREQHLKDNYY.

At M1–N5 the chain is on the cytoplasmic side. Residues V6 to S26 traverse the membrane as a helical; Signal-anchor for type II membrane protein segment. Topologically, residues R27–Y373 are lumenal. N-linked (GlcNAc...) asparagine glycosylation is found at N29, N54, and N144.

The protein belongs to the glycosyltransferase 54 family. Isoform 2 self-associates; specifically in the endoplasmic reticulum prior to its translocation to the Golgi. Isoform 1 and isoform 2 interact with MGAT1, MGAT3 and MAN2A2; isoform 2 interacts specifically with MGAT1 in the Golgi. In terms of processing, isoform 2 is N-glycosylated; consisting of high-mannose and/or hybrid glycans. As to expression, isoform 1 and isoform 2 are specifically expressed in testis. Isoform 2 is expressed in spermatocytes but not in spermatids. Isoform 1 is expressed in spermatids.

The protein localises to the endoplasmic reticulum membrane. The protein resides in the endoplasmic reticulum-Golgi intermediate compartment membrane. It localises to the golgi apparatus membrane. Functionally, may play a role in male spermatogenesis. In vitro acts as inhibitor of MGAT1 activity causing cell surface proteins to carry mainly high mannose N-glycans. The function is mediated by its lumenal domain and occurs specifically in the Golgi. A catalytic glucosyltransferase activity is not detected. May be involved in regulation of Sertoli-germ cell interactions during specific stages of spermatogenesis. This chain is Alpha-1,3-mannosyl-glycoprotein 4-beta-N-acetylglucosaminyltransferase-like protein MGAT4D, found in Mus musculus (Mouse).